The chain runs to 621 residues: 1-deoxy-D-xylulose-5-phosphate synthase (621 aa).

Thiamine diphosphate-binding positions include H80 and 121–123 (GHS). D152 lines the Mg(2+) pocket. Residues 153–154 (GA), N181, Y288, and E370 each bind thiamine diphosphate. Residue N181 participates in Mg(2+) binding.

It belongs to the transketolase family. DXPS subfamily. As to quaternary structure, homodimer. The cofactor is Mg(2+). It depends on thiamine diphosphate as a cofactor.

The enzyme catalyses D-glyceraldehyde 3-phosphate + pyruvate + H(+) = 1-deoxy-D-xylulose 5-phosphate + CO2. It functions in the pathway metabolic intermediate biosynthesis; 1-deoxy-D-xylulose 5-phosphate biosynthesis; 1-deoxy-D-xylulose 5-phosphate from D-glyceraldehyde 3-phosphate and pyruvate: step 1/1. Functionally, catalyzes the acyloin condensation reaction between C atoms 2 and 3 of pyruvate and glyceraldehyde 3-phosphate to yield 1-deoxy-D-xylulose-5-phosphate (DXP). The polypeptide is 1-deoxy-D-xylulose-5-phosphate synthase (Shewanella woodyi (strain ATCC 51908 / MS32)).